The primary structure comprises 318 residues: L-malyl-CoA/beta-methylmalyl-CoA lyase (318 aa).

Residues Phe-19, Arg-24, Lys-30, and Arg-76 each coordinate substrate. Mg(2+) is bound by residues Glu-141 and Asp-168. Substrate-binding positions include 167–168 (AD) and 251–252 (IH).

It belongs to the HpcH/HpaI aldolase family. Homohexamer. Dimer of trimers. The cofactor is Mg(2+). Requires Mn(2+) as cofactor.

The enzyme catalyses (S)-malyl-CoA = glyoxylate + acetyl-CoA. The catalysed reaction is (2R,3S)-beta-methylmalyl-CoA = propanoyl-CoA + glyoxylate. Its activity is regulated as follows. In vitro inhibited by EDTA. Its function is as follows. Involved in the ethylmalonyl-CoA pathway for acetate assimilation. Catalyzes the reversible condensation of glyoxylate and acetyl-CoA to L-malyl-CoA and the reversible condensation of glyoxylate and propionyl-CoA to beta-methylmalyl-CoA. The chain is L-malyl-CoA/beta-methylmalyl-CoA lyase from Rhodobacter capsulatus (Rhodopseudomonas capsulata).